The sequence spans 364 residues: Uroporphyrinogen decarboxylase (364 aa).

Residues 28 to 32 (RQAGR), phenylalanine 47, aspartate 78, tyrosine 158, threonine 213, and histidine 334 each bind substrate.

Belongs to the uroporphyrinogen decarboxylase family. As to quaternary structure, homodimer.

It localises to the cytoplasm. It catalyses the reaction uroporphyrinogen III + 4 H(+) = coproporphyrinogen III + 4 CO2. Its pathway is porphyrin-containing compound metabolism; protoporphyrin-IX biosynthesis; coproporphyrinogen-III from 5-aminolevulinate: step 4/4. Functionally, catalyzes the decarboxylation of four acetate groups of uroporphyrinogen-III to yield coproporphyrinogen-III. In Ralstonia nicotianae (strain ATCC BAA-1114 / GMI1000) (Ralstonia solanacearum), this protein is Uroporphyrinogen decarboxylase.